A 216-amino-acid polypeptide reads, in one-letter code: Urease accessory protein UreG (216 aa).

A GTP-binding site is contributed by 24–31 (GPVGSGKT).

Belongs to the SIMIBI class G3E GTPase family. UreG subfamily. In terms of assembly, homodimer. UreD, UreF and UreG form a complex that acts as a GTP-hydrolysis-dependent molecular chaperone, activating the urease apoprotein by helping to assemble the nickel containing metallocenter of UreC. The UreE protein probably delivers the nickel.

It is found in the cytoplasm. In terms of biological role, facilitates the functional incorporation of the urease nickel metallocenter. This process requires GTP hydrolysis, probably effectuated by UreG. The sequence is that of Urease accessory protein UreG from Variovorax paradoxus (strain S110).